Here is a 720-residue protein sequence, read N- to C-terminus: Beta-glucan synthesis-associated protein KRE6 (720 aa).

Polar residues-rich tracts occupy residues 1–17 (MPLR…STNL), 31–51 (LSSS…NAGL), and 69–90 (SLSS…HDNS). The interval 1–90 (MPLRNLTETH…SDSSLLHDNS (90 aa)) is disordered. The Cytoplasmic portion of the chain corresponds to 1 to 252 (MPLRNLTETH…KYMDKRSASG (252 aa)). 6 positions are modified to phosphoserine: serine 81, serine 116, serine 133, serine 134, serine 136, and serine 139. Disordered stretches follow at residues 117-142 (TAND…SNLS) and 167-189 (QLNH…SFSS). Low complexity predominate over residues 133-142 (SSPSLNSNLS). Residues 253–273 (LAGVLLLFLAAIFIFIVLPAL) traverse the membrane as a helical; Signal-anchor for type II membrane protein segment. Residues 274–720 (TFTGAIDHES…CTSSKFKLSS (447 aa)) lie on the Lumenal side of the membrane. The GH16 domain occupies 289–664 (TYLTQYQYPQ…YVRIYQPSNA (376 aa)). N-linked (GlcNAc...) asparagine glycans are attached at residues asparagine 374, asparagine 461, asparagine 538, asparagine 563, and asparagine 691.

The protein belongs to the SKN1/KRE6 family. The cytoplasmic domain interacts with the actin patch assembly proteins LAS17 and SLA1. Interacts with KEG1.

The protein resides in the golgi apparatus membrane. Involved in the synthesis of (1-&gt;6)- and (1-&gt;3)-beta-D-glucan polymers of the yeast cell wall in vivo. It is required for full activity of beta-glucan synthase in vitro. May be involved in the maturation and transport of cell wall proteins (CWP) to the cell wall. May act as a transglucosidase and contribute to the construction of a protein-bound glucan-structure that acts as an acceptor site for the addition of (1-&gt;6)-beta-D-glucan at the cell surface. The chain is Beta-glucan synthesis-associated protein KRE6 (KRE6) from Saccharomyces cerevisiae (strain ATCC 204508 / S288c) (Baker's yeast).